The primary structure comprises 416 residues: Phosphoglycerate kinase (416 aa).

Ser-2 is modified (N-acetylserine). Val-23, Asp-24, Phe-25, Asn-26, Gln-38, Arg-39, Ser-62, His-63, Gly-65, and Arg-66 together coordinate (2R)-3-phosphoglycerate. Lys-82 is covalently cross-linked (Glycyl lysine isopeptide (Lys-Gly) (interchain with G-Cter in ubiquitin)). Thr-93 carries the phosphothreonine modification. Ser-110 bears the Phosphoserine mark. (2R)-3-phosphoglycerate-binding residues include Leu-121 and Arg-122. Phosphoserine occurs at positions 130 and 154. (2R)-3-phosphoglycerate contacts are provided by His-168 and Arg-169. At Ser-172 the chain carries Phosphoserine. Lys-197 participates in a covalent cross-link: Glycyl lysine isopeptide (Lys-Gly) (interchain with G-Cter in ubiquitin). Thr-203 is subject to Phosphothreonine. Gly-212 contacts ADP. Gly-212 contributes to the CDP binding site. AMP contacts are provided by Ala-213 and Lys-214. Ala-213 and Lys-214 together coordinate ATP. Ala-213 serves as a coordination point for Mg(2+). Mg(2+)-binding residues include Ala-216 and Asp-217. Asp-217 is a binding site for CDP. AMP is bound at residue Lys-218. ATP is bound at residue Lys-218. Gly-236 contributes to the ADP binding site. Gly-236 is a binding site for CDP. AMP is bound at residue Gly-237. Position 237 (Gly-237) interacts with ATP. A Phosphothreonine modification is found at Thr-241. Glycyl lysine isopeptide (Lys-Gly) (interchain with G-Cter in ubiquitin) cross-links involve residues Lys-258 and Lys-274. Thr-298 carries the post-translational modification Phosphothreonine. Lys-302 is covalently cross-linked (Glycyl lysine isopeptide (Lys-Gly) (interchain with G-Cter in ubiquitin)). Gly-311 contributes to the AMP binding site. Residues Gly-311 and Leu-312 each contribute to the ATP site. Ser-318 carries the post-translational modification Phosphoserine. Phosphothreonine is present on Thr-331. Asn-335 serves as a coordination point for ATP. Residues Gly-336 and Phe-341 each contribute to the CDP site. Phe-341 serves as a coordination point for ADP. AMP is bound at residue Glu-342. ATP is bound at residue Glu-342. Gly-371 provides a ligand contact to (2R)-3-phosphoglycerate. Positions 373 and 374 each coordinate ATP. Asp-373 serves as a coordination point for Mg(2+). Thr-392 bears the Phosphothreonine mark. The (2R)-3-phosphoglycerate site is built by Gly-394 and Gly-395.

This sequence belongs to the phosphoglycerate kinase family. In terms of assembly, monomer. Mg(2+) serves as cofactor.

The protein localises to the cytoplasm. The protein resides in the mitochondrion. It catalyses the reaction (2R)-3-phosphoglycerate + ATP = (2R)-3-phospho-glyceroyl phosphate + ADP. The protein operates within carbohydrate degradation; glycolysis; pyruvate from D-glyceraldehyde 3-phosphate: step 2/5. Its function is as follows. Catalyzes one of the two ATP producing reactions in the glycolytic pathway via the reversible conversion of 1,3-diphosphoglycerate to 3-phosphoglycerate. Both L- and D- forms of purine and pyrimidine nucleotides can be used as substrates, but the activity is much lower on pyrimidines. Negatively regulates the biosynthesis of acetyl-CoA from pyruvate in the mitochondrion. The protein is Phosphoglycerate kinase (PGK1) of Saccharomyces cerevisiae (strain ATCC 204508 / S288c) (Baker's yeast).